The sequence spans 251 residues: Methionine aminopeptidase (251 aa).

Histidine 77 is a binding site for substrate. A divalent metal cation contacts are provided by aspartate 94, aspartate 105, and histidine 169. Substrate is bound at residue histidine 176. A divalent metal cation is bound by residues glutamate 202 and glutamate 233.

This sequence belongs to the peptidase M24A family. Methionine aminopeptidase type 1 subfamily. In terms of assembly, monomer. Co(2+) serves as cofactor. Requires Zn(2+) as cofactor. Mn(2+) is required as a cofactor. The cofactor is Fe(2+).

The enzyme catalyses Release of N-terminal amino acids, preferentially methionine, from peptides and arylamides.. In terms of biological role, removes the N-terminal methionine from nascent proteins. The N-terminal methionine is often cleaved when the second residue in the primary sequence is small and uncharged (Met-Ala-, Cys, Gly, Pro, Ser, Thr, or Val). Requires deformylation of the N(alpha)-formylated initiator methionine before it can be hydrolyzed. The polypeptide is Methionine aminopeptidase (Mycoplasma capricolum subsp. capricolum (strain California kid / ATCC 27343 / NCTC 10154)).